We begin with the raw amino-acid sequence, 103 residues long: Small ribosomal subunit protein uS14c (103 aa).

The segment at 27-56 (SKKKIRSKVSPLSLSEKTKMQEKLQSLPRN) is disordered.

Belongs to the universal ribosomal protein uS14 family. As to quaternary structure, part of the 30S ribosomal subunit.

The protein resides in the plastid. It localises to the chloroplast. Functionally, binds 16S rRNA, required for the assembly of 30S particles. The protein is Small ribosomal subunit protein uS14c of Zea mays (Maize).